The following is a 349-amino-acid chain: Hydroxymethylglutaryl-CoA synthase (349 aa).

Asp29 serves as a coordination point for (3S)-3-hydroxy-3-methylglutaryl-CoA. Glu81 acts as the Proton donor/acceptor in catalysis. Positions 113, 154, 202, and 235 each coordinate (3S)-3-hydroxy-3-methylglutaryl-CoA. The active-site Acyl-thioester intermediate is Cys113. His235 (proton donor/acceptor) is an active-site residue. A CoA-binding site is contributed by Arg240. The (3S)-3-hydroxy-3-methylglutaryl-CoA site is built by Arg244, Asn267, and Ser297.

Belongs to the thiolase-like superfamily. Archaeal HMG-CoA synthase family. Interacts with acetoacetyl-CoA thiolase that catalyzes the precedent step in the pathway and with a DUF35 protein. The acetoacetyl-CoA thiolase/HMG-CoA synthase complex channels the intermediate via a fused CoA-binding site, which allows for efficient coupling of the endergonic thiolase reaction with the exergonic HMGCS reaction.

It catalyses the reaction acetoacetyl-CoA + acetyl-CoA + H2O = (3S)-3-hydroxy-3-methylglutaryl-CoA + CoA + H(+). The protein operates within metabolic intermediate biosynthesis; (R)-mevalonate biosynthesis; (R)-mevalonate from acetyl-CoA: step 2/3. Its function is as follows. Catalyzes the condensation of acetyl-CoA with acetoacetyl-CoA to form 3-hydroxy-3-methylglutaryl-CoA (HMG-CoA). Functions in the mevalonate (MVA) pathway leading to isopentenyl diphosphate (IPP), a key precursor for the biosynthesis of isoprenoid compounds that are building blocks of archaeal membrane lipids. In Pyrobaculum arsenaticum (strain DSM 13514 / JCM 11321 / PZ6), this protein is Hydroxymethylglutaryl-CoA synthase.